We begin with the raw amino-acid sequence, 153 residues long: Small ribosomal subunit protein uS7c (153 aa).

This sequence belongs to the universal ribosomal protein uS7 family. As to quaternary structure, part of the 30S ribosomal subunit.

The protein resides in the plastid. Its function is as follows. One of the primary rRNA binding proteins, it binds directly to 16S rRNA where it nucleates assembly of the head domain of the 30S subunit. This Helicosporidium sp. subsp. Simulium jonesii (Green alga) protein is Small ribosomal subunit protein uS7c (rps7).